Consider the following 754-residue polypeptide: Protein NUCLEOLAR FACTOR 1 (754 aa).

Disordered stretches follow at residues 1-56 (MAPN…EAMV), 69-166 (SLGS…ELST), and 390-413 (EDTD…QKSS). Residues 42-52 (SPEESSIEAES) show a composition bias toward acidic residues. Residues 80–93 (MNKRRQREEEGKSD) show a composition bias toward basic and acidic residues. Composition is skewed to acidic residues over residues 94 to 110 (TEED…ENSG) and 138 to 161 (DTQE…DEEV). Positions 402 to 413 (SKNGNSIKQKSS) are enriched in polar residues.

The protein belongs to the UTP25 family. As to quaternary structure, component of the ribosomal small subunit (SSU) processome composed of at least 40 protein subunits and snoRNA U3. Interacts with THAL in the nucleus. In terms of tissue distribution, preferentially expressed in differentiating cells in young tissues such as floral buds, ovules, embryos, secondary roots, pollen, young seedlings and vascular bundles. Observed ubiquitously.

The protein resides in the nucleus. It is found in the nucleolus. DEAD-box RNA helicase-like protein required for pre-18S rRNA processing, specifically at sites A0, A1, and A2. Involved in the control of rRNA expression. Required for embryo development and female gametogenesis. The sequence is that of Protein NUCLEOLAR FACTOR 1 from Arabidopsis thaliana (Mouse-ear cress).